The sequence spans 238 residues: MRSARLGRLLWMLFITEIQAATELPEEKYILAEGETLNVNCPVTVGVYSNSRKAWQKLNRNGKFQTLAITERVSGQVSKVQVGKIFLTDEPSEGMLHVQMTNVQAEDSGLYRCVIYQPPKDPIILFYPVRLVVTNYSSGTPASAETPTQSCSPTTTLPPTTTTNRHRPRPRTVRTVTQFLTDFTTSLSSPGLKVTLTNVTDITRDTEISLILPAVCGLLSKSLVFIVLFVVTRMSFTP.

Residues 1-20 (MRSARLGRLLWMLFITEIQA) form the signal peptide. The 109-residue stretch at 21–129 (ATELPEEKYI…KDPIILFYPV (109 aa)) folds into the Ig-like V-type domain. The Extracellular portion of the chain corresponds to 21–210 (ATELPEEKYI…DITRDTEISL (190 aa)). An intrachain disulfide couples Cys-41 to Cys-113. Asn-135 carries an N-linked (GlcNAc...) asparagine glycan. The segment at 141 to 169 (PASAETPTQSCSPTTTLPPTTTTNRHRPR) is disordered. Over residues 146 to 163 (TPTQSCSPTTTLPPTTTT) the composition is skewed to low complexity. A glycan (N-linked (GlcNAc...) asparagine) is linked at Asn-198. Residues 211–231 (ILPAVCGLLSKSLVFIVLFVV) form a helical membrane-spanning segment. Residues 232–238 (TRMSFTP) are Cytoplasmic-facing.

In terms of assembly, monomer. Homomultimer; when activated. Interacts with TYROBP/DAP12. Interacts with TLR4.

It localises to the cell membrane. Its function is as follows. Cell surface receptor that plays important roles in innate and adaptive immunity by amplifying inflammatory responses. Upon activation by various ligands such as PGLYRP1, HMGB1 or HSP70, multimerizes and forms a complex with transmembrane adapter TYROBP/DAP12. In turn, initiates a SYK-mediated cascade of tyrosine phosphorylation, activating multiple downstream mediators such as BTK, MAPK1, MAPK3 or phospholipase C-gamma. This cascade promotes the neutrophil- and macrophage-mediated release of pro-inflammatory cytokines and/or chemokines, as well as their migration and thereby amplifies inflammatory responses that are triggered by bacterial and fungal infections. By also promoting the amplification of inflammatory signals that are initially triggered by Toll-like receptor (TLR) and NOD-like receptor engagement, plays a major role in the pathophysiology of acute and chronic inflammatory diseases of different etiologies including septic shock and atherosclerosis. This is Triggering receptor expressed on myeloid cells 1 (TREM1) from Sus scrofa (Pig).